The primary structure comprises 261 residues: MTIQSLIVTIGSGGLVGFALGLLGGGGSILATPLLLYVVGVTNPHIAIGTSAVAVSANAYANLIAHAWKGHVWWRSAVIFALVGTLGAFLGSSIGMLIDGQRLLLLFGLLMAMVGLLMLRGRATAPHAEQHQTVLRMCMKTSAVAILTGAASGFFGIGGGFLIVPALIFATRMPTINAIGSSLLAVGTFGLITTLNYARHDLVDWTIAMEFIVGGITGGGLGTLLATRFSASKHLLNRVFGLIVIAVAIYVIWRSWASLVA.

8 helical membrane passes run 6-26 (LIVTIGSGGLVGFALGLLGGG), 29-49 (ILATPLLLYVVGVTNPHIAIG), 78-98 (VIFALVGTLGAFLGSSIGMLI), 99-119 (DGQRLLLLFGLLMAMVGLLML), 150-170 (AASGFFGIGGGFLIVPALIFA), 175-195 (TINAIGSSLLAVGTFGLITTL), 205-225 (WTIAMEFIVGGITGGGLGTLL), and 239-259 (VFGLIVIAVAIYVIWRSWASL).

The protein belongs to the 4-toluene sulfonate uptake permease (TSUP) (TC 2.A.102) family.

It is found in the cell membrane. This chain is Probable membrane transporter protein XF_0764, found in Xylella fastidiosa (strain 9a5c).